A 296-amino-acid polypeptide reads, in one-letter code: 5,10-methylenetetrahydrofolate reductase (296 aa).

Residue Glu-28 is the Proton donor/acceptor of the active site. An NADH-binding site is contributed by Thr-59. Residues Tyr-60, Ala-62, His-88, Arg-118, Gly-119, Asp-120, Ala-132, Tyr-152, His-156, Ala-159, Asp-165, Asn-168, Arg-171, and Lys-172 each coordinate FAD. Asp-120 lines the (6S)-5-methyl-5,6,7,8-tetrahydrofolate pocket. Gln-183 is a binding site for NADH. 3 residues coordinate (6S)-5-methyl-5,6,7,8-tetrahydrofolate: Gln-183, Gln-219, and Arg-279.

It belongs to the methylenetetrahydrofolate reductase family. In terms of assembly, homotetramer. FAD serves as cofactor.

It catalyses the reaction (6S)-5-methyl-5,6,7,8-tetrahydrofolate + NAD(+) = (6R)-5,10-methylene-5,6,7,8-tetrahydrofolate + NADH + H(+). It participates in one-carbon metabolism; tetrahydrofolate interconversion. Its pathway is amino-acid biosynthesis; L-methionine biosynthesis via de novo pathway. Functionally, catalyzes the NADH-dependent reduction of 5,10-methylenetetrahydrofolate to 5-methyltetrahydrofolate. Is required to provide the methyl group necessary for methionine synthetase to convert homocysteine to methionine; the methyl group is given by 5-methyltetrahydrofolate. Can also use NADPH as the reductant, but much less effectively than NADH. The protein is 5,10-methylenetetrahydrofolate reductase of Escherichia coli (strain K12).